The chain runs to 116 residues: MNIYAIYINSTQKNNNFIILEEGFSWIAALFSIFWALYHKMWIVVAITVIANIIATTIIVDFKFIFQIFLILSFGFFAADIRENYLNRNNYQLEDIIIANSRIEAELKFLERSILI.

A helical transmembrane segment spans residues 58–78; that stretch reads IIVDFKFIFQIFLILSFGFFA.

It is found in the membrane. This is an uncharacterized protein from Rickettsia prowazekii (strain Madrid E).